We begin with the raw amino-acid sequence, 882 residues long: Valine--tRNA ligase (882 aa).

Positions proline 48 to histidine 58 match the 'HIGH' region motif. The short motif at lysine 524–serine 528 is the 'KMSKS' region element. Residue lysine 527 coordinates ATP. Residues leucine 809–arginine 882 adopt a coiled-coil conformation. The tract at residues glycine 844–glutamine 866 is disordered. The segment covering phenylalanine 845–aspartate 863 has biased composition (basic and acidic residues).

It belongs to the class-I aminoacyl-tRNA synthetase family. ValS type 1 subfamily. Monomer.

It is found in the cytoplasm. The enzyme catalyses tRNA(Val) + L-valine + ATP = L-valyl-tRNA(Val) + AMP + diphosphate. Functionally, catalyzes the attachment of valine to tRNA(Val). As ValRS can inadvertently accommodate and process structurally similar amino acids such as threonine, to avoid such errors, it has a 'posttransfer' editing activity that hydrolyzes mischarged Thr-tRNA(Val) in a tRNA-dependent manner. This Latilactobacillus sakei subsp. sakei (strain 23K) (Lactobacillus sakei subsp. sakei) protein is Valine--tRNA ligase.